Here is a 452-residue protein sequence, read N- to C-terminus: Transcription factor SMP1 (452 aa).

The 55-residue stretch at 3-57 (RRKIEIEPIKDDRNRTVTFIKRKAGLFKKAHELSVLCQVDIAVIILGSNNTFYEY) folds into the MADS-box domain. The mef2-type DNA-binding region spans 58-87 (SSVDMSNLLNVHQNNTDLPHNIIEPSDYGD). The disordered stretch occupies residues 97-142 (NERKRRRRRATVLQPASHSGSCTVSSQDSSSVQNNGNLSAPLASND). The span at 115 to 127 (SGSCTVSSQDSSS) shows a compositional bias: low complexity.

It belongs to the MEF2 family. As to quaternary structure, can heterodimerize with RLM1. Interacts with HOG1. Post-translationally, phosphorylated by HOG1.

The protein resides in the nucleus. Transcription factor that controls part of the HOG1-mediated osmostress responses. Binds to the DNA sequence 5'-ACTACTA[TA](4)TAG-3'. Does not appear to function in the MPK1 pathway. In Saccharomyces cerevisiae (strain ATCC 204508 / S288c) (Baker's yeast), this protein is Transcription factor SMP1 (SMP1).